A 215-amino-acid polypeptide reads, in one-letter code: CASP-like protein 1U3 (215 aa).

Over M1 to T13 the chain is Cytoplasmic. The helical transmembrane segment at A14–M34 threads the bilayer. At S35–P68 the chain is on the extracellular side. Residues F69–L89 traverse the membrane as a helical segment. Residues V90 to P105 are Cytoplasmic-facing. A helical membrane pass occupies residues L106–V126. Residues S127 to Q161 lie on the Extracellular side of the membrane. A helical transmembrane segment spans residues V162–V182. The Cytoplasmic portion of the chain corresponds to R183–H215. The interval G187–H215 is disordered. The span at D195–G205 shows a compositional bias: low complexity.

This sequence belongs to the Casparian strip membrane proteins (CASP) family. As to quaternary structure, homodimer and heterodimers.

It localises to the cell membrane. This is CASP-like protein 1U3 from Sorghum bicolor (Sorghum).